The sequence spans 291 residues: 3-hydroxy-5-phosphonooxypentane-2,4-dione thiolase (291 aa).

Residue lysine 203 is the Schiff-base intermediate with substrate of the active site.

It belongs to the DeoC/FbaB aldolase family. Homodecamer.

Its subcellular location is the cytoplasm. It catalyses the reaction dihydroxyacetone phosphate + acetyl-CoA = 3-hydroxy-2,4-dioxopentyl phosphate + CoA. Functionally, involved in the degradation of phospho-AI-2, thereby terminating induction of the lsr operon and closing the AI-2 signaling cycle. Catalyzes the transfer of an acetyl moiety from 3-hydroxy-5-phosphonooxypentane-2,4-dione to CoA to form glycerone phosphate and acetyl-CoA. The protein is 3-hydroxy-5-phosphonooxypentane-2,4-dione thiolase of Yersinia pestis bv. Antiqua (strain Antiqua).